We begin with the raw amino-acid sequence, 479 residues long: Kynurenine 3-monooxygenase (479 aa).

Residues Val19, 37–40 (YEAR), and Ala57 contribute to the FAD site. Residues Arg85 and Tyr99 each coordinate L-kynurenine. FAD-binding positions include Arg111, Leu136, Thr172, Asp304, and 317 to 318 (MN). L-kynurenine contacts are provided by Asn363 and Tyr398. 2 helical membrane-spanning segments follow: residues 385–404 (FLHA…VAFT) and 425–445 (GLFV…VHHL).

The protein belongs to the aromatic-ring hydroxylase family. KMO subfamily. It depends on FAD as a cofactor. As to expression, expressed by organs containing secondary lymphoid tissue, such as the lung, spleen, mesenteric lymph node, thymus and peripheral lymph nodes.

It localises to the mitochondrion outer membrane. It catalyses the reaction L-kynurenine + NADPH + O2 + H(+) = 3-hydroxy-L-kynurenine + NADP(+) + H2O. It functions in the pathway cofactor biosynthesis; NAD(+) biosynthesis; quinolinate from L-kynurenine: step 1/3. Functionally, catalyzes the hydroxylation of L-kynurenine (L-Kyn) to form 3-hydroxy-L-kynurenine (L-3OHKyn). Required for synthesis of quinolinic acid, a neurotoxic NMDA receptor antagonist and potential endogenous inhibitor of NMDA receptor signaling in axonal targeting, synaptogenesis and apoptosis during brain development. Quinolinic acid may also affect NMDA receptor signaling in pancreatic beta cells, osteoblasts, myocardial cells, and the gastrointestinal tract. This is Kynurenine 3-monooxygenase from Mus musculus (Mouse).